The chain runs to 302 residues: Nucleoside kinase (302 aa).

4 residues coordinate substrate: D17, Q33, G43, and N47. Position 109 (Q109) interacts with ATP. Substrate contacts are provided by residues 111 to 113 (TFF) and Q163. Residues N186 and 214 to 219 (TKGSKG) contribute to the ATP site. Substrate is bound at residue D247. D247 serves as the catalytic Proton acceptor.

Homodimer. The cofactor is Mg(2+). Requires Mn(2+) as cofactor.

It carries out the reaction cytidine + ATP = CMP + ADP + H(+). The enzyme catalyses guanosine + ATP = GMP + ADP + H(+). The catalysed reaction is inosine + ATP = IMP + ADP + H(+). Functionally, catalyzes the phosphorylation of a wide range of nucleosides to yield nucleoside monophosphates. Shows the highest activity for inosine, guanosine and cytidine, but very poor kinase activity with adenosine, thymidine, uridine and xanthosine. ATP is the best phosphate donor, but can also use ITP and GTP. Shows extremely low activity with fructose-6-phosphate. This chain is Nucleoside kinase, found in Methanocaldococcus jannaschii (strain ATCC 43067 / DSM 2661 / JAL-1 / JCM 10045 / NBRC 100440) (Methanococcus jannaschii).